Reading from the N-terminus, the 216-residue chain is UPF0323 lipoprotein HPG27_212 (216 aa).

A signal peptide spans 1 to 27 (MKKPYRKISDYAIVGGLSALVMVSIVG). A lipid anchor (N-palmitoyl cysteine) is attached at C28. Residue C28 is the site of S-diacylglycerol cysteine attachment. Residues 159–170 (QRTYKSPQAYQR) show a composition bias toward polar residues. A disordered region spans residues 159–216 (QRTYKSPQAYQRSQNSFSKSAPSASSMGGASKGQSGFFGSSRPTSSPAVSSGTRGFNS). Over residues 171–209 (SQNSFSKSAPSASSMGGASKGQSGFFGSSRPTSSPAVSS) the composition is skewed to low complexity.

This sequence belongs to the UPF0323 family.

The protein localises to the cell membrane. The polypeptide is UPF0323 lipoprotein HPG27_212 (Helicobacter pylori (strain G27)).